A 334-amino-acid polypeptide reads, in one-letter code: Endochitinase 3 (334 aa).

The N-terminal stretch at 1–23 is a signal peptide; it reads MRLLEFTALSSLLVLFLLLAVSA. Residues 24–65 form the Chitin-binding type-1 domain; that stretch reads EQCGKQAGGARCPSGMCCSNFGWCGNTQDYCGPGKCQSQCPS. 4 cysteine pairs are disulfide-bonded: cysteine 26-cysteine 41, cysteine 35-cysteine 47, cysteine 40-cysteine 54, and cysteine 59-cysteine 63. The segment at 64–84 is disordered; sequence PSGPGPTPRPPTPTPGPSTGD. The span at 66–79 shows a compositional bias: pro residues; sequence GPGPTPRPPTPTPG. 3 positions are modified to 4-hydroxyproline: proline 73, proline 74, and proline 76. 3 cysteine pairs are disulfide-bonded: cysteine 106–cysteine 168, cysteine 180–cysteine 188, and cysteine 287–cysteine 319. Catalysis depends on glutamate 150, which acts as the Proton donor. Positions 328 to 334 are cleaved as a propeptide — removed in mature form; sequence GLLLETM.

The protein belongs to the glycosyl hydrolase 19 family. Chitinase class I subfamily. Post-translationally, the 4-hydroxyproline residues are not glycosylated in this plant vacuolar protein.

It localises to the vacuole. The enzyme catalyses Random endo-hydrolysis of N-acetyl-beta-D-glucosaminide (1-&gt;4)-beta-linkages in chitin and chitodextrins.. Functionally, defense against chitin-containing fungal pathogens. The polypeptide is Endochitinase 3 (CHN14) (Nicotiana tabacum (Common tobacco)).